Consider the following 366-residue polypeptide: Spore germination protein GerM (366 aa).

Disordered regions lie at residues 42-72 and 346-366; these read TFVN…KADQ and EKGE…TGSF. Residues 58–69 are compositionally biased toward basic and acidic residues; it reads KKTESEKSDTAK. Polar residues predominate over residues 357–366; it reads RPSQVNTGSF.

Its function is as follows. Unknown. Affects both sporulation and germination. The polypeptide is Spore germination protein GerM (gerM) (Bacillus subtilis (strain 168)).